The following is a 211-amino-acid chain: Probable nicotinate-nucleotide adenylyltransferase (211 aa).

This sequence belongs to the NadD family.

It carries out the reaction nicotinate beta-D-ribonucleotide + ATP + H(+) = deamido-NAD(+) + diphosphate. Its pathway is cofactor biosynthesis; NAD(+) biosynthesis; deamido-NAD(+) from nicotinate D-ribonucleotide: step 1/1. In terms of biological role, catalyzes the reversible adenylation of nicotinate mononucleotide (NaMN) to nicotinic acid adenine dinucleotide (NaAD). This chain is Probable nicotinate-nucleotide adenylyltransferase, found in Thermoanaerobacter sp. (strain X514).